Consider the following 806-residue polypeptide: Dimethyl sulfoxide reductase DmsA (806 aa).

Positions 1 to 35 (MSNFNQISRRDFVKASSAGAALAVSNLTLPFNVMA) form a signal peptide, tat-type signal. One can recognise a 4Fe-4S Mo/W bis-MGD-type domain in the interval 47–109 (ERIVWSACTV…SMRRRVYNPD (63 aa)). [4Fe-4S] cluster is bound by residues Cys-54, Cys-58, Cys-62, and Cys-95. Mo-bis(molybdopterin guanine dinucleotide) is bound by residues 163–167 (LGGTM), Ser-196, 236–237 (ET), 262–263 (ID), 283–285 (GTD), 378–379 (WG), Arg-382, Asn-480, 504–505 (ID), His-693, 699–701 (HST), Asn-780, and 796–797 (QH). Positions 786–806 (RPSPLAKGNPQHSNLVQVERL) are disordered. The segment covering 795–806 (PQHSNLVQVERL) has biased composition (polar residues).

Belongs to the prokaryotic molybdopterin-containing oxidoreductase family. Heterotrimeric enzyme composed of a catalytic heterodimer (DmsAB) and a membrane anchor protein (DmsC). Requires [4Fe-4S] cluster as cofactor. Mo-bis(molybdopterin guanine dinucleotide) serves as cofactor. Predicted to be exported by the Tat system. The position of the signal peptide cleavage has not been experimentally proven.

It localises to the cell membrane. The enzyme catalyses dimethyl sulfide + a menaquinone + H2O = dimethyl sulfoxide + a menaquinol. In terms of biological role, catalyzes the reduction of dimethyl sulfoxide (DMSO) to dimethyl sulfide (DMS). The terminal DMSO reductase can also use various sulfoxides and N-oxide compounds as terminal electron acceptor in addition to DMSO. This Haemophilus influenzae (strain ATCC 51907 / DSM 11121 / KW20 / Rd) protein is Dimethyl sulfoxide reductase DmsA (dmsA).